We begin with the raw amino-acid sequence, 221 residues long: Guanylate kinase (221 aa).

Residues 18-196 (GFLFILSSPS…SASLIKSIYL (179 aa)) form the Guanylate kinase-like domain. 25–32 (SPSGAGKS) contacts ATP.

It belongs to the guanylate kinase family.

It is found in the cytoplasm. The enzyme catalyses GMP + ATP = GDP + ADP. Its function is as follows. Essential for recycling GMP and indirectly, cGMP. This Bartonella quintana (strain Toulouse) (Rochalimaea quintana) protein is Guanylate kinase.